The primary structure comprises 441 residues: tRNA modification GTPase MnmE (441 aa).

3 residues coordinate (6S)-5-formyl-5,6,7,8-tetrahydrofolate: arginine 21, glutamate 79, and lysine 118. The TrmE-type G domain maps to 214-370; that stretch reads GFKIAIVGKP…LEGYLKTQDT (157 aa). Residues 224 to 229, 243 to 249, and 268 to 271 each bind GTP; these read NVGKSS, SDEAGTT, and DTAG. The Mg(2+) site is built by serine 228 and threonine 249. Lysine 441 contacts (6S)-5-formyl-5,6,7,8-tetrahydrofolate.

The protein belongs to the TRAFAC class TrmE-Era-EngA-EngB-Septin-like GTPase superfamily. TrmE GTPase family. In terms of assembly, homodimer. Heterotetramer of two MnmE and two MnmG subunits. K(+) is required as a cofactor.

The protein localises to the cytoplasm. Its function is as follows. Exhibits a very high intrinsic GTPase hydrolysis rate. Involved in the addition of a carboxymethylaminomethyl (cmnm) group at the wobble position (U34) of certain tRNAs, forming tRNA-cmnm(5)s(2)U34. The chain is tRNA modification GTPase MnmE from Campylobacter concisus (strain 13826).